The following is a 430-amino-acid chain: Tol-Pal system protein TolB (430 aa).

Positions 1-26 are cleaved as a signal peptide; that stretch reads MSLMTKLGLRALVASCLIAAGGAAHA.

It belongs to the TolB family. As to quaternary structure, the Tol-Pal system is composed of five core proteins: the inner membrane proteins TolA, TolQ and TolR, the periplasmic protein TolB and the outer membrane protein Pal. They form a network linking the inner and outer membranes and the peptidoglycan layer.

The protein resides in the periplasm. Its function is as follows. Part of the Tol-Pal system, which plays a role in outer membrane invagination during cell division and is important for maintaining outer membrane integrity. This is Tol-Pal system protein TolB from Paraburkholderia phymatum (strain DSM 17167 / CIP 108236 / LMG 21445 / STM815) (Burkholderia phymatum).